Reading from the N-terminus, the 300-residue chain is Alpha-ketoglutarate-dependent dioxygenase alkB homolog 4 (300 aa).

Ala-2 carries the post-translational modification N-acetylalanine. The Fe2OG dioxygenase domain occupies 148 to 272 (PVEQCNLDYS…RVCATFRELS (125 aa)). His-167, Asp-169, and His-252 together coordinate Fe cation. Position 263 (Arg-263) interacts with 2-oxoglutarate.

Belongs to the alkB family. In terms of assembly, interacts with ZFHX3, MLLT3, MLLT1, HSF4, EP300, TES, EIF3C, MTMR6 and PSMA6. Fe(2+) is required as a cofactor.

Its subcellular location is the cytoplasm. It is found in the nucleus. The protein localises to the nucleolus. It localises to the midbody. The catalysed reaction is an N(6)-methyl-2'-deoxyadenosine in DNA + 2-oxoglutarate + O2 = a 2'-deoxyadenosine in DNA + formaldehyde + succinate + CO2. It catalyses the reaction N(6)-methyl-L-lysyl-[protein] + 2-oxoglutarate + O2 = L-lysyl-[protein] + formaldehyde + succinate + CO2. Dioxygenase that mediates demethylation of actin monomethylated at 'Lys-84' (K84me1), thereby acting as a regulator of actomyosin-processes. Demethylation of actin K84me1 is required for maintaining actomyosin dynamics supporting normal cleavage furrow ingression during cytokinesis and cell migration. In addition to proteins, also demethylates DNA: specifically demethylates DNA methylated on the 6th position of adenine (N(6)-methyladenosine) DNA, thereby regulating Polycomb silencing. This Mus musculus (Mouse) protein is Alpha-ketoglutarate-dependent dioxygenase alkB homolog 4.